The chain runs to 444 residues: MSANHMTPDEIVAELDKFIIGQNRAKRAVAVALRNRWRRQQVAEPLRHEIHPKNILMIGPTGVGKTEIARRLAKLANAPFIKIEATKFTEVGYVGRDVDTIIRDLTEYSIKQTRELEMRRVRSHAEDAAEDRILDALVPPPRGASGEPERGEDNSARQTFRKRLREGKIDDLEIEIEIAQPMPQMDVMTPPGMEEMAEQLRGMFAGLARDKKKSKKIKVREAFKLIVEEEAAKRVNEDDLRAAAITNVEQNGIVFLDEIDKIAARQETGGADVSRQGVQRDLLPLVEGTTVNTRYGMVRTDHILFIASGAFHLARPSDLIPELQGRFPIRVELDSLSAEDFVSILSETDASLIKQYTALLGTEDVKLEFTDDGIRRLAELAFSVNERTENIGARRLYTVMEKLLEELSFDASANSGEVITIDAAYVDLQLAETAGSQDLARYVL.

Residues I20 and 62-67 (GVGKTE) each bind ATP. Positions 130–158 (EDRILDALVPPPRGASGEPERGEDNSARQ) are disordered. Residues D257, E322, and R394 each coordinate ATP.

Belongs to the ClpX chaperone family. HslU subfamily. A double ring-shaped homohexamer of HslV is capped on each side by a ring-shaped HslU homohexamer. The assembly of the HslU/HslV complex is dependent on binding of ATP.

Its subcellular location is the cytoplasm. In terms of biological role, ATPase subunit of a proteasome-like degradation complex; this subunit has chaperone activity. The binding of ATP and its subsequent hydrolysis by HslU are essential for unfolding of protein substrates subsequently hydrolyzed by HslV. HslU recognizes the N-terminal part of its protein substrates and unfolds these before they are guided to HslV for hydrolysis. This is ATP-dependent protease ATPase subunit HslU from Bordetella parapertussis (strain 12822 / ATCC BAA-587 / NCTC 13253).